The following is a 406-amino-acid chain: Elongation factor Tu (406 aa).

The 206-residue stretch at 10–215 (KPHVNVGTIG…AIDEYIPTPV (206 aa)) folds into the tr-type G domain. The interval 19–26 (GHVDHGKT) is G1. 19–26 (GHVDHGKT) serves as a coordination point for GTP. Thr26 lines the Mg(2+) pocket. Positions 61-65 (GITIN) are G2. The interval 82-85 (DCPG) is G3. GTP contacts are provided by residues 82–86 (DCPGH) and 137–140 (NKVD). The G4 stretch occupies residues 137-140 (NKVD). Residues 175–177 (SAL) form a G5 region.

It belongs to the TRAFAC class translation factor GTPase superfamily. Classic translation factor GTPase family. EF-Tu/EF-1A subfamily. Monomer.

It localises to the cytoplasm. The catalysed reaction is GTP + H2O = GDP + phosphate + H(+). GTP hydrolase that promotes the GTP-dependent binding of aminoacyl-tRNA to the A-site of ribosomes during protein biosynthesis. This Thermus aquaticus protein is Elongation factor Tu.